A 485-amino-acid polypeptide reads, in one-letter code: Glutamate--tRNA ligase (485 aa).

The 'HIGH' region signature appears at P12–T22. Positions K253–R257 match the 'KMSKS' region motif. K256 is an ATP binding site.

Belongs to the class-I aminoacyl-tRNA synthetase family. Glutamate--tRNA ligase type 1 subfamily. In terms of assembly, monomer.

It localises to the cytoplasm. The catalysed reaction is tRNA(Glu) + L-glutamate + ATP = L-glutamyl-tRNA(Glu) + AMP + diphosphate. Functionally, catalyzes the attachment of glutamate to tRNA(Glu) in a two-step reaction: glutamate is first activated by ATP to form Glu-AMP and then transferred to the acceptor end of tRNA(Glu). This is Glutamate--tRNA ligase from Sinorhizobium medicae (strain WSM419) (Ensifer medicae).